Here is a 127-residue protein sequence, read N- to C-terminus: Apolipoprotein C-IV (127 aa).

Positions Met1 to Cys27 are cleaved as a signal peptide. N-linked (GlcNAc...) asparagine glycosylation is present at Asn63.

It belongs to the apolipoprotein C4 family.

The protein resides in the secreted. Functionally, may participate in lipoprotein metabolism. The chain is Apolipoprotein C-IV (APOC4) from Colobus guereza (Mantled guereza).